A 500-amino-acid polypeptide reads, in one-letter code: Mannan polymerase II complex ANP1 subunit (500 aa).

Topologically, residues 1 to 15 are cytoplasmic; it reads MKYNNRKLSFNPTTV. Residues 16 to 27 form a helical; Signal-anchor for type II membrane protein membrane-spanning segment; sequence SIAGTLLTVFFL. Residues 28 to 500 are Lumenal-facing; it reads TRLVLSFFSI…VPLDFDPDRN (473 aa). Residues 424–500 form a disordered region; sequence WSEEGDGSEL…VPLDFDPDRN (77 aa). Residues 446–467 are compositionally biased toward low complexity; the sequence is QQQQQQQQQQQQQQQQQQQQQQ. A compositionally biased stretch (basic and acidic residues) spans 489–500; sequence KEVPLDFDPDRN.

It belongs to the ANP1/MMN9/VAN1 family. In terms of assembly, component of the M-Pol II complex composed of ANP1, MNN9, MNN10, MNN11 and HOC1.

The protein localises to the endoplasmic reticulum membrane. The protein resides in the golgi apparatus membrane. Its function is as follows. Involved in the organization of the secretory pathway. Required to maintain a functional Golgi apparatus. In terms of biological role, the M-Pol II complex possesses alpha-1,6-mannosyltransferase activity and is probably involved in the elongation of the mannan backbone of N-linked glycans on cell wall and periplasmic proteins. The polypeptide is Mannan polymerase II complex ANP1 subunit (ANP1) (Saccharomyces cerevisiae (strain ATCC 204508 / S288c) (Baker's yeast)).